Consider the following 106-residue polypeptide: Programmed cell death activator egl-1 (106 aa).

The segment at 73–81 (LAAMCDDFD) is BH3-like.

In terms of assembly, interacts with ced-9; the interaction results in ced-4 release from the ced-4/ced-9 complex. Interaction with ced-9 may enhance interaction of ced-9 with drp-1, but not with ced-4. A ced-9/egl-1 complex may recruit drp-1 to the mitochondrial surface.

The protein resides in the synapse. In terms of biological role, plays a major role in programmed cell death (PCD or apoptosis) by negatively regulating ced-9. Binds to and directly inhibits the activity of ced-9, releasing the cell death activator ced-4 from a ced-9/ced-4 containing protein complex and allowing ced-4 to activate the cell-killing caspase ced-3. Required to activate programmed cell death in the sister cells of the serotonergic neurosecretory motor (NSM) neurons during embryogenesis. Required to activate programmed cell death in the sister cells of the M4 motor neuron and I1 pharyngeal neuron during embryogenesis. During larval development, required for the elimination of transient presynaptic components upstream of ced-9, ced-4 and ced-3 apoptotic pathway. Together with ain-1, a component of the miRNA-induced-silencing complex (miRISC), and probably upstream of ced-3 and ced-4, regulates temporal cell fate patterning during larval development. Has been shown in two studies to be dispensable in mitochondrial dynamics and morphology during early embryonic development. However, one study shows that during larval development, egl-1 is involved in modulating mitochondrial dynamics, perhaps acting by stabilizing the interaction between ced-9 and drp-1 in order to promote mitochondrial fission. Involved in inducing mitochondrial fragmentation during apoptosis, probably acting via ced-9 and dynamin-related protein drp-1. This Caenorhabditis elegans protein is Programmed cell death activator egl-1.